The sequence spans 256 residues: MNNDVFPNKFKAALAAKQVQIGCWSALSNPISTEVLGLAGFDWLVLDGEHAPNDISTFIPQLMALKGSASAPVVRVPTNEPVIIKRLLDIGFYNFLIPFVETKEEAELAVASTRYPPEGIRGVSVSHRANMFGTVADYFAQSNKNITILVQIESQQGVDNVDAIAATEGVDGIFVGPSDLAAALGHLGNASHPDVQKAIQHIFNRASAHGKPSGILAPVEADARRYLEWGATFVAVGSDLGVFRSATQKLADTFKK.

The active-site Proton acceptor is His-50. Gln-151 contributes to the substrate binding site. Glu-153 is a binding site for Mg(2+). Positions 178 and 179 each coordinate substrate. Asp-179 is a Mg(2+) binding site.

It belongs to the HpcH/HpaI aldolase family. KDGluc aldolase subfamily. Homohexamer; trimer of dimers. Mg(2+) is required as a cofactor.

The catalysed reaction is 5-dehydro-4-deoxy-D-glucarate = 2-hydroxy-3-oxopropanoate + pyruvate. The enzyme catalyses 2-dehydro-3-deoxy-D-glucarate = 2-hydroxy-3-oxopropanoate + pyruvate. The protein operates within carbohydrate acid metabolism; galactarate degradation; D-glycerate from galactarate: step 2/3. Its function is as follows. Catalyzes the reversible retro-aldol cleavage of both 5-keto-4-deoxy-D-glucarate and 2-keto-3-deoxy-D-glucarate to pyruvate and tartronic semialdehyde. In Escherichia coli (strain K12 / DH10B), this protein is 5-keto-4-deoxy-D-glucarate aldolase.